The sequence spans 636 residues: DNA-dependent metalloprotease SPRTN (636 aa).

Positions 19 to 42 are disordered; sequence QETPAAGWPDEDCPSSKRRRVDPS. The 108-residue stretch at 76–183 folds into the SprT-like domain; sequence RAMFLQFNDK…ASGTNITIYH (108 aa). His-141 is a Zn(2+) binding site. Glu-142 is an active-site residue. Residues His-145 and His-160 each coordinate Zn(2+). 2 disordered regions span residues 238–382 and 398–430; these read TYTK…GKQR and RGAS…PSGK. The span at 241–268 shows a compositional bias: basic and acidic residues; it reads KIKEPENYGKTGKSDKQRDKMPATEMPK. The segment covering 272–281 has biased composition (low complexity); it reads PPSSTSSSGS. The SHP-box motif lies at 290-298; that stretch reads FSGRGFVLG. Residues 302–311 show a composition bias toward polar residues; that stretch reads QIPTNKQIQS. The span at 313–327 shows a compositional bias: pro residues; the sequence is PKAPPEPLHSPPDSP. Over residues 341-374 the composition is skewed to polar residues; sequence RLSSGTSNIPRKRSVGNTNAFINVNGSPVRISNG. A compositionally biased stretch (low complexity) spans 399-416; it reads GASAVGSSKSSTDASTAD. A PIP-box motif is present at residues 451–458; that stretch reads ESNISKYF. The tract at residues 473-608 is disordered; the sequence is TFGSPQKSAI…VRDQQANNPP (136 aa). 2 stretches are compositionally biased toward polar residues: residues 492-523 and 545-554; these read FGSN…SGSS and SPRTSGTTPS. Residues 535–566 carry the Nuclear localization signal motif; sequence SNFPSPRNIGSPRTSGTTPSGAKKRSWEEHNS. 2 stretches are compositionally biased toward basic and acidic residues: residues 559 to 570 and 584 to 593; these read RSWEEHNSERVF and TDKKREEVRS. The UBZ4-type zinc finger occupies 612-636; that stretch reads TVHCPVCHIRLPESTINDHLDSCLL. The Zn(2+) site is built by Cys-615, Cys-618, His-630, and Cys-634.

It belongs to the Spartan family. As to quaternary structure, homodimer. Zn(2+) serves as cofactor. Post-translationally, autocatalytically cleaved in response to double-stranded DNA-binding: autocatalytic cleavage takes place in trans and leads to inactivation.

The protein resides in the nucleus. It localises to the chromosome. DNA-binding activates the protease activity: single-stranded DNA-binding specifically activates ability to cleave covalent DNA-protein cross-links (DPCs). In contrast, double-stranded DNA-binding specifically activates autocatalytic cleavage, and subsequent inactivation. Functionally, DNA-dependent metalloendopeptidase that mediates the proteolytic cleavage of covalent DNA-protein cross-links (DPCs) during DNA synthesis, thereby playing a key role in maintaining genomic integrity. DPCs are highly toxic DNA lesions that interfere with essential chromatin transactions, such as replication and transcription, and which are induced by reactive agents, such as UV light or formaldehyde. Associates with the DNA replication machinery and specifically removes DPCs during DNA synthesis. Catalyzes proteolytic cleavage of the hmces DNA-protein cross-link following unfolding by the brip1/fancj helicase. Acts as a pleiotropic protease for DNA-binding proteins cross-linked with DNA, such as top1, top2a, histones H3 and H4. Mediates degradation of DPCs that are not ubiquitinated, while it is not able to degrade ubiquitinated DPCs. SPRTN activation requires polymerase collision with DPCs followed by helicase bypass of DPCs. May also act as a 'reader' of ubiquitinated pcna: facilitates chromatin association of rad18 and is required for efficient pcna monoubiquitination, promoting a feed-forward loop to enhance pcna ubiquitination and translesion DNA synthesis. Acts as a regulator of translesion DNA synthesis by recruiting vcp/p97 to sites of DNA damage. The polypeptide is DNA-dependent metalloprotease SPRTN (Danio rerio (Zebrafish)).